Reading from the N-terminus, the 583-residue chain is Ferredoxin--nitrite reductase, chloroplastic (583 aa).

The N-terminal 22 residues, 1 to 22 (MSSLSVRFLSPPLFSSTPAWPR), are a transit peptide targeting the chloroplast. Positions 461, 467, 502, and 506 each coordinate [4Fe-4S] cluster. Cys506 is a siroheme binding site.

The protein belongs to the nitrite and sulfite reductase 4Fe-4S domain family. Monomer. Siroheme serves as cofactor. The cofactor is [4Fe-4S] cluster.

It is found in the plastid. The protein resides in the chloroplast. It carries out the reaction 6 oxidized [2Fe-2S]-[ferredoxin] + NH4(+) + 2 H2O = nitrite + 6 reduced [2Fe-2S]-[ferredoxin] + 8 H(+). It participates in nitrogen metabolism; nitrate reduction (assimilation). The protein is Ferredoxin--nitrite reductase, chloroplastic (NIR1) of Betula pendula (European white birch).